We begin with the raw amino-acid sequence, 476 residues long: TOM1-like protein 1 (476 aa).

Positions 22–154 (ATFAGVQTED…DLVKKGVQFP (133 aa)) constitute a VHS domain. The disordered stretch occupies residues 155–179 (PSEAEAETARQETAQISSNPPTSVP). A compositionally biased stretch (polar residues) spans 170–179 (ISSNPPTSVP). The residue at position 171 (Ser-171) is a Phosphoserine. The GAT domain maps to 200–288 (EQIGKLHSEL…AILGYERFTR (89 aa)). Polar residues predominate over residues 298-314 (KNQKEATNTTSEPSAPS). A disordered region spans residues 298–327 (KNQKEATNTTSEPSAPSQDLLDLSPSPRMP). A phosphoserine mark is found at Ser-314, Ser-321, and Ser-323. Positions 392–395 (YDNF) are interaction with GRB2. Positions 421-425 (LPPLP) match the SH3-binding motif. The segment at 442–445 (YEVM) is interaction with PIK3R1. The residue at position 460 (Tyr-460) is a Phosphotyrosine. An SH2-binding motif is present at residues 460–463 (YEEI).

It belongs to the TOM1 family. As to quaternary structure, interacts with FYN, GRB2 and PIK3R1 when phosphorylated. Interacts with LYN. Phosphorylated on tyrosines by FYN and LYN.

It is found in the golgi apparatus. Its subcellular location is the golgi stack. The protein resides in the endosome membrane. It localises to the cytoplasm. The protein localises to the membrane. Its function is as follows. Probable adapter protein involved in signaling pathways. Interacts with the SH2 and SH3 domains of various signaling proteins when it is phosphorylated. May promote FYN activation, possibly by disrupting intramolecular SH3-dependent interactions. This chain is TOM1-like protein 1 (TOM1L1), found in Homo sapiens (Human).